The primary structure comprises 452 residues: MAVGLNKKEIDGPASQRAVACDLEPALPPIGARVTLNYPGKMDESIILQKKDTKYLRVGSDFAKESSLILPNSFIWSDNSLALNRLMVEGKKAKLIYLDPPYATGMGFSSRSNEHAYDDCLTEAAYLEFMRRRLILMREILDDDGTIYVHIGHQMLGELKCLLDEIFGRERFINLITRRKCSSKNSTKNNFANLNDYILCYSKGKKYIWNRPLKKPDAEWLAKEYPKTDSKGQFKLVPIHAPGVRHGATGGEWKGMLPPPGKHWQYTPEKLDILDASGDIHWSKTGNPRRKVYLTDDKSIGYTDYWEEFRDAHHQSILVTGYPTEKNFNMMKLIVGASSNPGDLVIDPFCGSGSTLHAASLLQRKWIGIDESLFAAKTVMKRFAIGRAPMGDYVNTSLNKQTELPLSLNETARHEYVSNDFNIYVDELTASVSKNELAEIQKAYRDLKANQQ.

The protein belongs to the N(4)/N(6)-methyltransferase family.

The catalysed reaction is a 2'-deoxyadenosine in DNA + S-adenosyl-L-methionine = an N(6)-methyl-2'-deoxyadenosine in DNA + S-adenosyl-L-homocysteine + H(+). Its function is as follows. A beta subtype methylase, recognizes the double-stranded sequence 5'-GGTNACC-3', methylates A-5 on both strands and protects the DNA from cleavage by the EcaI endonuclease. This is Type II methyltransferase M.EcaI (ecaIM) from Enterobacter cloacae.